Here is a 453-residue protein sequence, read N- to C-terminus: Tubulin beta-2 chain (453 aa).

GTP contacts are provided by Gln11, Glu71, Ser140, Gly144, Thr145, Gly146, Asn206, and Asn228. Glu71 contributes to the Mg(2+) binding site.

It belongs to the tubulin family. Dimer of alpha and beta chains. A typical microtubule is a hollow water-filled tube with an outer diameter of 25 nm and an inner diameter of 15 nM. Alpha-beta heterodimers associate head-to-tail to form protofilaments running lengthwise along the microtubule wall with the beta-tubulin subunit facing the microtubule plus end conferring a structural polarity. Microtubules usually have 13 protofilaments but different protofilament numbers can be found in some organisms and specialized cells. Mg(2+) is required as a cofactor.

The protein resides in the cytoplasm. It localises to the cytoskeleton. Tubulin is the major constituent of microtubules, a cylinder consisting of laterally associated linear protofilaments composed of alpha- and beta-tubulin heterodimers. Microtubules grow by the addition of GTP-tubulin dimers to the microtubule end, where a stabilizing cap forms. Below the cap, tubulin dimers are in GDP-bound state, owing to GTPase activity of alpha-tubulin. The polypeptide is Tubulin beta-2 chain (Geotrichum candidum (Oospora lactis)).